The primary structure comprises 176 residues: Transcriptional repressor NrdR (176 aa).

A zinc finger lies at 3-34 (CPFCQHTDSRVLESRSAEAGQSVRRRRECLQC). The ATP-cone domain occupies 49–139 (ITVIKRNQDR…VYRQFRGIRD (91 aa)). The tract at residues 151-176 (GDGPLPSVLDEPYEDTAQPTIMISPQ) is disordered. Residues 167 to 176 (AQPTIMISPQ) are compositionally biased toward polar residues.

The protein belongs to the NrdR family. The cofactor is Zn(2+).

In terms of biological role, negatively regulates transcription of bacterial ribonucleotide reductase nrd genes and operons by binding to NrdR-boxes. This is Transcriptional repressor NrdR from Acaryochloris marina (strain MBIC 11017).